We begin with the raw amino-acid sequence, 389 residues long: Chalcone synthase H2 (389 aa).

The active site involves C164.

It belongs to the thiolase-like superfamily. Chalcone/stilbene synthases family.

It localises to the cytoplasm. The catalysed reaction is (E)-4-coumaroyl-CoA + 3 malonyl-CoA + 3 H(+) = 2',4,4',6'-tetrahydroxychalcone + 3 CO2 + 4 CoA. Its pathway is secondary metabolite biosynthesis; flavonoid biosynthesis. Its function is as follows. Involved in the biosynthesis of prenylated phenolics natural products which contribute to the bitter taste of beer and display broad biological activities. Chalcone synthase that can use 4-coumaroyl-CoA to produce 4,2',4',6'-tetrahydroxychalcone (also termed naringenin-chalcone or chalcone) which can, under specific conditions, spontaneously isomerize into naringenin. The polypeptide is Chalcone synthase H2 (Humulus lupulus (European hop)).